Reading from the N-terminus, the 252-residue chain is MSSFAQKSILKLKTKRGLNGKNIIEEMFFTPPLKIISPLEDEDIAEIMLISVSAGLLKDDCQDIQIHIGKESKIRLISQSYEKIHDTQDGYASKHTQITIEENAFLDYAPLPILPFKDSSFKNTTDIYLSKNARLHYSEIICAGRVAMGEIFDFSELSSRLRIYKENHLVFFENMNLKPAQMAMQNICLFDKYTHALSMVIFDDLIEVQALEQKIKNSSLNVGISTNNGGIIIKALDNQSERLLQFKKDLAL.

This sequence belongs to the UreD family. UreH, UreF and UreG form a complex that acts as a GTP-hydrolysis-dependent molecular chaperone, activating the urease apoprotein by helping to assemble the nickel containing metallocenter of UreC. The UreE protein probably delivers the nickel.

It localises to the cytoplasm. Functionally, required for maturation of urease via the functional incorporation of the urease nickel metallocenter. The protein is Urease accessory protein UreH of Helicobacter hepaticus (strain ATCC 51449 / 3B1).